Consider the following 1183-residue polypeptide: 3-hydroxy-3-methylglutaryl-coenzyme A reductase (1183 aa).

Residues 1–245 lie on the Cytoplasmic side of the membrane; that stretch reads MAAILLPQRF…DLLKNAETLD (245 aa). The SSD domain occupies 245–426; the sequence is DIVIMLLGYI…FTFYTAILSI (182 aa). A helical transmembrane segment spans residues 246 to 266; that stretch reads IVIMLLGYIAMHLTFVSLFLS. Residues 267–273 are Lumenal-facing; it reads MRKMGSK. A helical transmembrane segment spans residues 274–294; the sequence is FWLGICTLFSSVFAFLFGLVV. At 295–299 the chain is on the cytoplasmic side; the sequence is TTKLG. A helical transmembrane segment spans residues 300 to 320; sequence VPISVILLSEGLPFLVVTIGF. Topologically, residues 321–378 are lumenal; sequence EKNIVLTRAVMSHAIEHRRIQAQNSKSGKRSPERSTQNMIQYAVQAAIKEKGFEIIRD. Residues 379 to 399 form a helical membrane-spanning segment; that stretch reads YAIEIVILVIGAASGVQGGLQ. The Cytoplasmic segment spans residues 400 to 402; the sequence is QFC. The chain crosses the membrane as a helical span at residues 403–423; sequence FLAAWTLFFDFILLFTFYTAI. Residues 424-482 lie on the Lumenal side of the membrane; sequence LSIKLEINRIKRHVDMRMALEDDGVSRRVAENVAKGDDELNRVRGDAPLFGRKSSSIPK. Residues 483 to 503 form a helical membrane-spanning segment; it reads FKVLMILGFIFVNIVNICSIP. Residues 504–1183 are Cytoplasmic-facing; the sequence is FRNPSSMSTI…SAAAIQRSKR (680 aa). Catalysis depends on Glu828, which acts as the Charge relay system. 834 to 840 contacts CoA; sequence SASRGCK. NADP(+)-binding positions include 895–897 and 922–930; these read SRF and DAMGMNMIS. The Charge relay system role is filled by Lys962. 991-993 provides a ligand contact to CoA; that stretch reads VLK. Asp1038 (charge relay system) is an active-site residue. 1133–1134 contacts CoA; sequence AH. His1134 (proton donor) is an active-site residue. Residues 1136-1183 are disordered; that stretch reads QHNRSAAPSRSTTPAPPMTPVSLAMTSAQERSASTTSMSAAAIQRSKR. 1138-1139 contacts NADP(+); it reads NR. 2 stretches are compositionally biased toward low complexity: residues 1139–1148 and 1167–1177; these read RSAAPSRSTT and SASTTSMSAAA.

This sequence belongs to the HMG-CoA reductase family.

It localises to the endoplasmic reticulum membrane. It catalyses the reaction (R)-mevalonate + 2 NADP(+) + CoA = (3S)-3-hydroxy-3-methylglutaryl-CoA + 2 NADPH + 2 H(+). The protein operates within metabolic intermediate biosynthesis; (R)-mevalonate biosynthesis; (R)-mevalonate from acetyl-CoA: step 3/3. In terms of biological role, HMG-CoA reductase; part of the first module of ergosterol biosynthesis pathway that includes the early steps of the pathway, conserved across all eukaryotes, and which results in the formation of mevalonate from acetyl-coenzyme A (acetyl-CoA). In this module, the cytosolic acetyl-CoA acetyltransferase catalyzes the formation of acetoacetyl-CoA. The hydroxymethylglutaryl-CoA synthase then condenses acetyl-CoA with acetoacetyl-CoA to form HMG-CoA. The rate-limiting step of the early module is the reduction to mevalonate by the 3-hydroxy-3-methylglutaryl-coenzyme A (HMG-CoA) reductase HMGR. The protein is 3-hydroxy-3-methylglutaryl-coenzyme A reductase (HMGR) of Gibberella fujikuroi (strain CBS 195.34 / IMI 58289 / NRRL A-6831) (Bakanae and foot rot disease fungus).